We begin with the raw amino-acid sequence, 346 residues long: Phenylalanine--tRNA ligase alpha subunit (346 aa).

Glu261 provides a ligand contact to Mg(2+).

The protein belongs to the class-II aminoacyl-tRNA synthetase family. Phe-tRNA synthetase alpha subunit type 1 subfamily. Tetramer of two alpha and two beta subunits. Requires Mg(2+) as cofactor.

It is found in the cytoplasm. It catalyses the reaction tRNA(Phe) + L-phenylalanine + ATP = L-phenylalanyl-tRNA(Phe) + AMP + diphosphate + H(+). The polypeptide is Phenylalanine--tRNA ligase alpha subunit (Streptococcus agalactiae serotype Ia (strain ATCC 27591 / A909 / CDC SS700)).